Consider the following 356-residue polypeptide: Histidinol-phosphate aminotransferase (356 aa).

At lysine 214 the chain carries N6-(pyridoxal phosphate)lysine.

Belongs to the class-II pyridoxal-phosphate-dependent aminotransferase family. Histidinol-phosphate aminotransferase subfamily. In terms of assembly, homodimer. Requires pyridoxal 5'-phosphate as cofactor.

The catalysed reaction is L-histidinol phosphate + 2-oxoglutarate = 3-(imidazol-4-yl)-2-oxopropyl phosphate + L-glutamate. Its pathway is amino-acid biosynthesis; L-histidine biosynthesis; L-histidine from 5-phospho-alpha-D-ribose 1-diphosphate: step 7/9. The polypeptide is Histidinol-phosphate aminotransferase (Escherichia coli O45:K1 (strain S88 / ExPEC)).